A 202-amino-acid polypeptide reads, in one-letter code: Indolepyruvate oxidoreductase subunit IorB (202 aa).

Heterodimer of the IorA and IorB subunits.

The enzyme catalyses indole-3-pyruvate + 2 oxidized [2Fe-2S]-[ferredoxin] + CoA = (indol-3-yl)acetyl-CoA + 2 reduced [2Fe-2S]-[ferredoxin] + CO2 + H(+). In terms of biological role, catalyzes the ferredoxin-dependent oxidative decarboxylation of arylpyruvates. The polypeptide is Indolepyruvate oxidoreductase subunit IorB (iorB) (Thermococcus kodakarensis (strain ATCC BAA-918 / JCM 12380 / KOD1) (Pyrococcus kodakaraensis (strain KOD1))).